Here is a 101-residue protein sequence, read N- to C-terminus: Urease subunit beta (101 aa).

Belongs to the urease beta subunit family. As to quaternary structure, heterotrimer of UreA (gamma), UreB (beta) and UreC (alpha) subunits. Three heterotrimers associate to form the active enzyme.

The protein resides in the cytoplasm. It catalyses the reaction urea + 2 H2O + H(+) = hydrogencarbonate + 2 NH4(+). It participates in nitrogen metabolism; urea degradation; CO(2) and NH(3) from urea (urease route): step 1/1. In Ralstonia nicotianae (strain ATCC BAA-1114 / GMI1000) (Ralstonia solanacearum), this protein is Urease subunit beta.